A 308-amino-acid polypeptide reads, in one-letter code: Ribosomal RNA large subunit methyltransferase F (308 aa).

Belongs to the methyltransferase superfamily. METTL16/RlmF family.

The protein resides in the cytoplasm. The enzyme catalyses adenosine(1618) in 23S rRNA + S-adenosyl-L-methionine = N(6)-methyladenosine(1618) in 23S rRNA + S-adenosyl-L-homocysteine + H(+). Specifically methylates the adenine in position 1618 of 23S rRNA. This Shigella flexneri serotype 5b (strain 8401) protein is Ribosomal RNA large subunit methyltransferase F.